We begin with the raw amino-acid sequence, 224 residues long: Ras-related protein RABA4b (224 aa).

An N-acetylalanine modification is found at Ala-2. 24 to 31 contributes to the GTP binding site; sequence GDSAVGKS. The Effector region signature appears at 46–54; that stretch reads SKATIGVEF. Residues 72 to 76, 130 to 133, and 160 to 161 each bind GTP; these read DTAGQ, NKSD, and SA. 2 S-geranylgeranyl cysteine lipidation sites follow: Cys-220 and Cys-221.

It belongs to the small GTPase superfamily. Rab family. As to quaternary structure, interacts with TCTP1. In terms of tissue distribution, expressed in roots, stems, leaves and flowers. Expressed in tips of growing root hair cells.

It is found in the early endosome membrane. The protein resides in the golgi apparatus. It localises to the trans-Golgi network membrane. Functionally, regulator of membrane trafficking. May be required for secretion of cell wall components in cells. The sequence is that of Ras-related protein RABA4b from Arabidopsis thaliana (Mouse-ear cress).